A 394-amino-acid chain; its full sequence is Succinate--CoA ligase [ADP-forming] subunit beta (394 aa).

Residues Lys-46, 53–55 (GRG), Glu-99, Cys-102, and Glu-107 contribute to the ATP site. Mg(2+)-binding residues include Asn-199 and Asp-213. Substrate contacts are provided by residues Asn-264 and 321–323 (GIV).

This sequence belongs to the succinate/malate CoA ligase beta subunit family. In terms of assembly, heterotetramer of two alpha and two beta subunits. Mg(2+) is required as a cofactor.

It carries out the reaction succinate + ATP + CoA = succinyl-CoA + ADP + phosphate. It catalyses the reaction GTP + succinate + CoA = succinyl-CoA + GDP + phosphate. It participates in carbohydrate metabolism; tricarboxylic acid cycle; succinate from succinyl-CoA (ligase route): step 1/1. Its function is as follows. Succinyl-CoA synthetase functions in the citric acid cycle (TCA), coupling the hydrolysis of succinyl-CoA to the synthesis of either ATP or GTP and thus represents the only step of substrate-level phosphorylation in the TCA. The beta subunit provides nucleotide specificity of the enzyme and binds the substrate succinate, while the binding sites for coenzyme A and phosphate are found in the alpha subunit. This Haemophilus influenzae (strain PittGG) protein is Succinate--CoA ligase [ADP-forming] subunit beta.